A 213-amino-acid chain; its full sequence is Probable nicotinate-nucleotide adenylyltransferase (213 aa).

The protein belongs to the NadD family.

The catalysed reaction is nicotinate beta-D-ribonucleotide + ATP + H(+) = deamido-NAD(+) + diphosphate. It functions in the pathway cofactor biosynthesis; NAD(+) biosynthesis; deamido-NAD(+) from nicotinate D-ribonucleotide: step 1/1. Functionally, catalyzes the reversible adenylation of nicotinate mononucleotide (NaMN) to nicotinic acid adenine dinucleotide (NaAD). The chain is Probable nicotinate-nucleotide adenylyltransferase from Escherichia coli O17:K52:H18 (strain UMN026 / ExPEC).